The chain runs to 88 residues: DNA-directed RNA polymerase subunit omega (88 aa).

The protein belongs to the RNA polymerase subunit omega family. In terms of assembly, the RNAP catalytic core consists of 2 alpha, 1 beta, 1 beta' and 1 omega subunit. When a sigma factor is associated with the core the holoenzyme is formed, which can initiate transcription.

It catalyses the reaction RNA(n) + a ribonucleoside 5'-triphosphate = RNA(n+1) + diphosphate. Promotes RNA polymerase assembly. Latches the N- and C-terminal regions of the beta' subunit thereby facilitating its interaction with the beta and alpha subunits. The sequence is that of DNA-directed RNA polymerase subunit omega from Kineococcus radiotolerans (strain ATCC BAA-149 / DSM 14245 / SRS30216).